The chain runs to 83 residues: Apolipoprotein C-I, acidic form (83 aa).

Residues 1–26 (MRLFLSLPVLVVVLSMVLEGPAPAQG) form the signal peptide.

The protein belongs to the apolipoprotein C1 family.

The protein localises to the secreted. In Gorilla gorilla gorilla (Western lowland gorilla), this protein is Apolipoprotein C-I, acidic form (APOC1A).